The sequence spans 376 residues: Chaperone protein DnaJ 2 (376 aa).

The J domain occupies 5–70 (DYYEVLGVNR…QKRAAYDRYG (66 aa)). A CR-type zinc finger spans residues 135 to 213 (GADKTIRIPT…CGGAGRVKRQ (79 aa)). C148, C151, C165, C168, C187, C190, C201, and C204 together coordinate Zn(2+). CXXCXGXG motif repeat units follow at residues 148–155 (CETCHGSG), 165–172 (CPTCGGAG), 187–194 (CPKCHGTG), and 201–208 (CRDCGGAG).

This sequence belongs to the DnaJ family. In terms of assembly, homodimer. The cofactor is Zn(2+).

The protein resides in the cytoplasm. Its function is as follows. Participates actively in the response to hyperosmotic and heat shock by preventing the aggregation of stress-denatured proteins and by disaggregating proteins, also in an autonomous, DnaK-independent fashion. Unfolded proteins bind initially to DnaJ; upon interaction with the DnaJ-bound protein, DnaK hydrolyzes its bound ATP, resulting in the formation of a stable complex. GrpE releases ADP from DnaK; ATP binding to DnaK triggers the release of the substrate protein, thus completing the reaction cycle. Several rounds of ATP-dependent interactions between DnaJ, DnaK and GrpE are required for fully efficient folding. Also involved, together with DnaK and GrpE, in the DNA replication of plasmids through activation of initiation proteins. This is Chaperone protein DnaJ 2 from Aromatoleum aromaticum (strain DSM 19018 / LMG 30748 / EbN1) (Azoarcus sp. (strain EbN1)).